A 165-amino-acid polypeptide reads, in one-letter code: Ribosome maturation factor RimM (165 aa).

A PRC barrel domain is found at 92 to 163 (EARHYWADLE…RVVVDPPEGL (72 aa)).

This sequence belongs to the RimM family. As to quaternary structure, binds ribosomal protein uS19.

The protein localises to the cytoplasm. Functionally, an accessory protein needed during the final step in the assembly of 30S ribosomal subunit, possibly for assembly of the head region. Essential for efficient processing of 16S rRNA. May be needed both before and after RbfA during the maturation of 16S rRNA. It has affinity for free ribosomal 30S subunits but not for 70S ribosomes. The sequence is that of Ribosome maturation factor RimM from Anaeromyxobacter sp. (strain Fw109-5).